The chain runs to 651 residues: A-type voltage-gated potassium channel KCND1 (651 aa).

Over 1–183 the chain is Cytoplasmic; sequence MAAGVATWLP…RAFENPHTST (183 aa). The segment at 2–20 is interaction with KCNIP1, KCNIP2, and other family members; sequence AAGVATWLPFARAAAVGWL. Zn(2+)-binding residues include His-104, Cys-131, and Cys-132. Positions 144–164 are disordered; that stretch reads AERLAEDEEAEQAGEGPALPA. The helical transmembrane segment at 184 to 205 threads the bilayer; it reads AALVFYYVTGFFIAVSVIANVV. Over 206 to 230 the chain is Extracellular; that stretch reads ETIPCRGTPRWPSKEQSCGDRFPTA. Residues 231 to 252 form a helical membrane-spanning segment; it reads FFCMDTACVLIFTGEYLLRLFA. The Cytoplasmic segment spans residues 253 to 263; that stretch reads APSRCRFLRSV. Residues 264–284 form a helical membrane-spanning segment; it reads MSLIDVVAILPYYIGLFVPKN. The Extracellular segment spans residues 285-287; it reads DDV. The chain crosses the membrane as a helical; Voltage-sensor span at residues 288–308; the sequence is SGAFVTLRVFRVFRIFKFSRH. At 309-323 the chain is on the cytoplasmic side; that stretch reads SQGLRILGYTLKSCA. The S4-S5 linker stretch occupies residues 310 to 323; the sequence is QGLRILGYTLKSCA. Residues 324–345 traverse the membrane as a helical segment; sequence SELGFLLFSLTMAIIIFATVMF. Residues 346-359 lie on the Extracellular side of the membrane; sequence YAEKGTSKTNFTSI. Asn-355 is a glycosylation site (N-linked (GlcNAc...) asparagine). The helical intramembrane region spans 360–371; that stretch reads PAAFWYTIVTMT. The short motif at 372–377 is the Selectivity filter element; the sequence is TLGYGD. The stretch at 372–379 is an intramembrane region; that stretch reads TLGYGDMV. At 380–386 the chain is on the extracellular side; the sequence is PSTIAGK. Residues 387-415 form a helical membrane-spanning segment; that stretch reads IFGSICSLSGVLVIALPVPVIVSNFSRIY. Residues 416–651 are Cytoplasmic-facing; it reads HQNQRADKRR…LPETVKISSL (236 aa). Ser-458 is subject to Phosphoserine. Residues 474–489 are required for dendritic targeting; sequence FEQQHHHLLHCLEKTT. Ser-555 is modified (phosphoserine). Disordered stretches follow at residues 566-585 and 601-651; these read RRSP…HDSL and IPTP…ISSL. Positions 626 to 637 are enriched in polar residues; that stretch reads TPNTTLRNSSLG.

The protein belongs to the potassium channel family. D (Shal) (TC 1.A.1.2) subfamily. Kv4.1/KCND1 sub-subfamily. Component of heteromultimeric potassium channels. Identified in potassium channel complexes containing KCND1, KCND2, KCND3, KCNIP1, KCNIP2, KCNIP3, KCNIP4, DPP6 and DPP10.

The protein resides in the cell membrane. It carries out the reaction K(+)(in) = K(+)(out). In terms of biological role, A-type voltage-gated potassium channel that mediates transmembrane potassium transport in excitable membranes in the brain. Mediates A-type current I(SA) in suprachiasmatic nucleus (SCN) neurons. Exhibits a low-threshold A-type current with a hyperpolarized steady-state inactivation midpoint and the recovery process was steeply voltage-dependent, with recovery being markedly faster at more negative potentials. May regulates repetitive firing rates in the suprachiasmatic nucleus (SCN) neurons and circadian rhythms in neuronal excitability and behavior. Contributes to the regulation of the circadian rhythm of action potential firing in suprachiasmatic nucleus neurons, which regulates the circadian rhythm of locomotor activity. The regulatory subunit KCNIP1 modulates the kinetics of channel inactivation, increases the current amplitudes and accelerates recovery from inactivation, shifts activation in a depolarizing direction. The regulatory subunit DPP10 decreases the voltage sensitivity of the inactivation channel gating. This Mus musculus (Mouse) protein is A-type voltage-gated potassium channel KCND1.